We begin with the raw amino-acid sequence, 457 residues long: Oxysterol-binding protein-related protein 3C (457 aa).

2 disordered regions span residues 37 to 61 (NEGVEVINPEGGKEDAEEEAQKGRW) and 363 to 393 (QGDLSKAGSEKHSLEERQRAEKRTRETKGQK). 2 stretches are compositionally biased toward basic and acidic residues: residues 47-61 (GGKEDAEEEAQKGRW) and 370-391 (GSEKHSLEERQRAEKRTRETKG).

This sequence belongs to the OSBP family. Expressed in roots, leaves, stems and flowers.

Its function is as follows. May be involved in the transport of sterols. In Arabidopsis thaliana (Mouse-ear cress), this protein is Oxysterol-binding protein-related protein 3C (ORP3C).